A 287-amino-acid polypeptide reads, in one-letter code: Phosphatidylserine decarboxylase proenzyme (287 aa).

Catalysis depends on charge relay system; for autoendoproteolytic cleavage activity residues Asp-89, His-146, and Ser-252. Ser-252 functions as the Schiff-base intermediate with substrate; via pyruvic acid; for decarboxylase activity in the catalytic mechanism. Ser-252 carries the post-translational modification Pyruvic acid (Ser); by autocatalysis.

The protein belongs to the phosphatidylserine decarboxylase family. PSD-B subfamily. Prokaryotic type I sub-subfamily. Heterodimer of a large membrane-associated beta subunit and a small pyruvoyl-containing alpha subunit. Requires pyruvate as cofactor. In terms of processing, is synthesized initially as an inactive proenzyme. Formation of the active enzyme involves a self-maturation process in which the active site pyruvoyl group is generated from an internal serine residue via an autocatalytic post-translational modification. Two non-identical subunits are generated from the proenzyme in this reaction, and the pyruvate is formed at the N-terminus of the alpha chain, which is derived from the carboxyl end of the proenzyme. The autoendoproteolytic cleavage occurs by a canonical serine protease mechanism, in which the side chain hydroxyl group of the serine supplies its oxygen atom to form the C-terminus of the beta chain, while the remainder of the serine residue undergoes an oxidative deamination to produce ammonia and the pyruvoyl prosthetic group on the alpha chain. During this reaction, the Ser that is part of the protease active site of the proenzyme becomes the pyruvoyl prosthetic group, which constitutes an essential element of the active site of the mature decarboxylase.

It localises to the cell membrane. It catalyses the reaction a 1,2-diacyl-sn-glycero-3-phospho-L-serine + H(+) = a 1,2-diacyl-sn-glycero-3-phosphoethanolamine + CO2. Its pathway is phospholipid metabolism; phosphatidylethanolamine biosynthesis; phosphatidylethanolamine from CDP-diacylglycerol: step 2/2. In terms of biological role, catalyzes the formation of phosphatidylethanolamine (PtdEtn) from phosphatidylserine (PtdSer). This is Phosphatidylserine decarboxylase proenzyme from Shewanella sediminis (strain HAW-EB3).